A 562-amino-acid polypeptide reads, in one-letter code: Berberine bridge enzyme-like C-1 (562 aa).

Positions 1–19 (MFPLIILISFSFTFLSASA) are cleaved as a signal peptide. 2 N-linked (GlcNAc...) asparagine glycosylation sites follow: asparagine 29 and asparagine 41. A disulfide bridge connects residues cysteine 33 and cysteine 90. Residues 68-244 (NMPKPTVIIL…YAWKIRLVKV (177 aa)) enclose the FAD-binding PCMH-type domain. Histidine 105 carries the post-translational modification Pros-8alpha-FAD histidine. Asparagine 359, asparagine 498, and asparagine 558 each carry an N-linked (GlcNAc...) asparagine glycan.

It belongs to the oxygen-dependent FAD-linked oxidoreductase family. It depends on FAD as a cofactor. As to expression, mostly expressed in roots.

It is found in the vacuole. It functions in the pathway alkaloid biosynthesis; nicotine biosynthesis. Its function is as follows. Involved in the biosynthesis of pyridine alkaloid natural products, leading mainly to the production of anabasine, anatabine, nicotine and nornicotine, effective deterrents against herbivores with antiparasitic and pesticide properties (neurotoxins); nornicotine serves as the precursor in the synthesis of the carcinogen compound N'-nitrosonornicotine (NNN). Catalyzes a late oxidation step subsequent to the pyridine ring condensation reaction in the biosynthesis of alkaloids. The sequence is that of Berberine bridge enzyme-like C-1 from Nicotiana tabacum (Common tobacco).